The following is a 438-amino-acid chain: Thymidine phosphorylase (438 aa).

The protein belongs to the thymidine/pyrimidine-nucleoside phosphorylase family. In terms of assembly, homodimer.

The catalysed reaction is thymidine + phosphate = 2-deoxy-alpha-D-ribose 1-phosphate + thymine. Its pathway is pyrimidine metabolism; dTMP biosynthesis via salvage pathway; dTMP from thymine: step 1/2. In terms of biological role, the enzymes which catalyze the reversible phosphorolysis of pyrimidine nucleosides are involved in the degradation of these compounds and in their utilization as carbon and energy sources, or in the rescue of pyrimidine bases for nucleotide synthesis. The sequence is that of Thymidine phosphorylase from Burkholderia lata (strain ATCC 17760 / DSM 23089 / LMG 22485 / NCIMB 9086 / R18194 / 383).